Reading from the N-terminus, the 647-residue chain is Threonine--tRNA ligase (647 aa).

The region spanning 1-61 (MINITFPDGA…TEDGSIEIVT (61 aa)) is the TGS domain. The interval 242–540 (DHRKLGKELD…LIENYKGAFP (299 aa)) is catalytic. Residues Cys336, His387, and His517 each coordinate Zn(2+).

This sequence belongs to the class-II aminoacyl-tRNA synthetase family. Homodimer. It depends on Zn(2+) as a cofactor.

It localises to the cytoplasm. The enzyme catalyses tRNA(Thr) + L-threonine + ATP = L-threonyl-tRNA(Thr) + AMP + diphosphate + H(+). Catalyzes the attachment of threonine to tRNA(Thr) in a two-step reaction: L-threonine is first activated by ATP to form Thr-AMP and then transferred to the acceptor end of tRNA(Thr). Also edits incorrectly charged L-seryl-tRNA(Thr). The chain is Threonine--tRNA ligase from Streptococcus pneumoniae serotype 19F (strain G54).